A 97-amino-acid chain; its full sequence is U-scoloptoxin(10)-Sa2a (97 aa).

Positions 1–23 (MNKSMLIFFTILFLTYIIEEKEA) are cleaved as a signal peptide.

The protein belongs to the scoloptoxin-10 family. Post-translationally, contains 3 disulfide bonds. In terms of tissue distribution, expressed by the venom gland.

It localises to the secreted. The protein is U-scoloptoxin(10)-Sa2a of Scolopendra alternans (Florida Keys giant centipede).